We begin with the raw amino-acid sequence, 140 residues long: Anti-sigma F factor (140 aa).

This sequence belongs to the anti-sigma-factor family.

The enzyme catalyses L-seryl-[protein] + ATP = O-phospho-L-seryl-[protein] + ADP + H(+). The catalysed reaction is L-threonyl-[protein] + ATP = O-phospho-L-threonyl-[protein] + ADP + H(+). Binds to sigma F and blocks its ability to form an RNA polymerase holoenzyme (E-sigma F). Phosphorylates SpoIIAA on a serine residue. This phosphorylation may enable SpoIIAA to act as an anti-anti-sigma factor that counteracts SpoIIAB and thus releases sigma F from inhibition. The chain is Anti-sigma F factor from Clostridium perfringens (strain SM101 / Type A).